The chain runs to 520 residues: 2-isopropylmalate synthase (520 aa).

The Pyruvate carboxyltransferase domain maps to 5 to 268 (VYIFDTTLRD…YTDVNTKEIY (264 aa)). Mn(2+) is bound by residues Asp-14, His-202, His-204, and Asn-238. The regulatory domain stretch occupies residues 394-520 (KVLHFQVQSG…RQEIREEGTV (127 aa)).

The protein belongs to the alpha-IPM synthase/homocitrate synthase family. LeuA type 1 subfamily. Homodimer. Mn(2+) serves as cofactor.

The protein localises to the cytoplasm. It carries out the reaction 3-methyl-2-oxobutanoate + acetyl-CoA + H2O = (2S)-2-isopropylmalate + CoA + H(+). Its pathway is amino-acid biosynthesis; L-leucine biosynthesis; L-leucine from 3-methyl-2-oxobutanoate: step 1/4. In terms of biological role, catalyzes the condensation of the acetyl group of acetyl-CoA with 3-methyl-2-oxobutanoate (2-ketoisovalerate) to form 3-carboxy-3-hydroxy-4-methylpentanoate (2-isopropylmalate). The sequence is that of 2-isopropylmalate synthase from Aquifex aeolicus (strain VF5).